Consider the following 187-residue polypeptide: Peptide deformylase (187 aa).

The Fe cation site is built by Cys107 and His149. The active site involves Glu150. Residue His153 participates in Fe cation binding.

The protein belongs to the polypeptide deformylase family. Requires Fe(2+) as cofactor.

It carries out the reaction N-terminal N-formyl-L-methionyl-[peptide] + H2O = N-terminal L-methionyl-[peptide] + formate. In terms of biological role, removes the formyl group from the N-terminal Met of newly synthesized proteins. Requires at least a dipeptide for an efficient rate of reaction. N-terminal L-methionine is a prerequisite for activity but the enzyme has broad specificity at other positions. In Picosynechococcus sp. (strain ATCC 27264 / PCC 7002 / PR-6) (Agmenellum quadruplicatum), this protein is Peptide deformylase.